Here is a 357-residue protein sequence, read N- to C-terminus: Homoserine O-acetyltransferase (357 aa).

Residues 51-340 (NVIVICHALT…EPYGHDAFLI (290 aa)) form the AB hydrolase-1 domain. The Nucleophile role is filled by Ser147. Arg216 contacts substrate. Residues Asp306 and His335 contribute to the active site. Asp336 is a binding site for substrate.

This sequence belongs to the AB hydrolase superfamily. MetX family. As to quaternary structure, homodimer.

The protein localises to the cytoplasm. It catalyses the reaction L-homoserine + acetyl-CoA = O-acetyl-L-homoserine + CoA. It participates in amino-acid biosynthesis; L-methionine biosynthesis via de novo pathway; O-acetyl-L-homoserine from L-homoserine: step 1/1. Its function is as follows. Transfers an acetyl group from acetyl-CoA to L-homoserine, forming acetyl-L-homoserine. In Chlorobium chlorochromatii (strain CaD3), this protein is Homoserine O-acetyltransferase.